The primary structure comprises 594 residues: Insulin-like growth factor 2 mRNA-binding protein 3-A (594 aa).

RRM domains lie at 2 to 75 and 81 to 156; these read NKLY…HSVP and RKLQ…YIPD. Low complexity predominate over residues 161–177; it reads PQAPSQQLQQQPQQQHP. Residues 161–206 form a disordered region; sequence PQAPSQQLQQQPQQQHPQGRRGFGQRGPARQGSPGAAARPKPQTEV. KH domains lie at 205–270 and 286–353; these read EVPL…CKII and EIPL…EEEI. Residues 392 to 415 form a disordered region; the sequence is GMPPPSVGVPSPTSSTSYPPFGQQ. The span at 399–411 shows a compositional bias: low complexity; the sequence is GVPSPTSSTSYPP. KH domains are found at residues 418-483 and 500-566; these read SETV…QGRI and KLET…QRKI.

The protein belongs to the RRM IMP/VICKZ family. As to quaternary structure, homodimer and multimer. Associates with microtubules. Interaction with a translocation machinery protein TRAPA of the endoplasmic reticulum. Component of a mRNP complex, at least composed of DAZAP1, IGF2BP3, STAU and VgRBP60. The mRNP complex with DAZAP1, IGF2BP3, STAU and VgRBP60 is only found in the cytoplasm. Interacts with a hnRNP 1 related RNA transport protein VgRBP60 both in the nucleus (in a RNA-independent manner) and the cytoplasm (in a RNA-dependent manner). Found in a B3 activator complex.

Its subcellular location is the nucleus. The protein localises to the cytoplasm. It is found in the endoplasmic reticulum. In terms of biological role, RNA-binding protein that acts as a regulator of mRNA transport and localization. Binds to the RNA sequence motif 5'-UUCAC-3'. Preferentially binds to N6-methyladenosine (m6A)-containing mRNAs and increases their stability. Mediates the specific association of Vg1 RNA to microtubules. Binds specifically to the vegetal localization elements (VLE or VgLE) in the 3'-UTR of Vg1 and VegT mRNAs. Binds to the Vg1 and VegT mRNAs in both the nucleus and the cytoplasm. May regulate mRNA translation. Acts as a transcription regulator. Binds to the 5'-[TA]GGTTACT-3' motif within element 3 of the TFIIIA gene promoter. This chain is Insulin-like growth factor 2 mRNA-binding protein 3-A (igf2bp3-a), found in Xenopus laevis (African clawed frog).